We begin with the raw amino-acid sequence, 121 residues long: uncharacterized protein (121 aa).

The first 31 residues, 1–31 (MILNNKGFIRILEATIAGIMVILVFSYLVMS), serve as a signal peptide directing secretion.

The protein to B.burgdorferi BB0465 N-terminal region.

This is an uncharacterized protein from Methanocaldococcus jannaschii (strain ATCC 43067 / DSM 2661 / JAL-1 / JCM 10045 / NBRC 100440) (Methanococcus jannaschii).